We begin with the raw amino-acid sequence, 108 residues long: Parvalbumin alpha (108 aa).

Ala1 carries the post-translational modification N-acetylalanine. EF-hand domains follow at residues 37 to 72 (MSAN…FAAD) and 76 to 108 (LTDA…VHEA). Residues Asp50, Asp52, Ser54, Phe56, Glu58, Glu61, Asp89, Asp91, Asp93, Lys95, and Glu100 each contribute to the Ca(2+) site.

Belongs to the parvalbumin family.

In terms of biological role, in muscle, parvalbumin is thought to be involved in relaxation after contraction. It binds two calcium ions. This chain is Parvalbumin alpha, found in Esox lucius (Northern pike).